Here is a 279-residue protein sequence, read N- to C-terminus: Large ribosomal subunit protein uL2 (279 aa).

Disordered stretches follow at residues 1–59 (MGIR…GGHK) and 224–279 (VAMN…KNKR). 2 stretches are compositionally biased toward basic residues: residues 50 to 59 (TTRHKGGGHK) and 269 to 279 (VRRRRTGKNKR).

Belongs to the universal ribosomal protein uL2 family. In terms of assembly, part of the 50S ribosomal subunit. Forms a bridge to the 30S subunit in the 70S ribosome.

In terms of biological role, one of the primary rRNA binding proteins. Required for association of the 30S and 50S subunits to form the 70S ribosome, for tRNA binding and peptide bond formation. It has been suggested to have peptidyltransferase activity; this is somewhat controversial. Makes several contacts with the 16S rRNA in the 70S ribosome. This chain is Large ribosomal subunit protein uL2, found in Arthrobacter sp. (strain FB24).